The following is a 437-amino-acid chain: Trigger factor (437 aa).

One can recognise a PPIase FKBP-type domain in the interval 161–246 (GDRVNIDFKG…VNKVEGKALP (86 aa)).

The protein belongs to the FKBP-type PPIase family. Tig subfamily.

It localises to the cytoplasm. The enzyme catalyses [protein]-peptidylproline (omega=180) = [protein]-peptidylproline (omega=0). Its function is as follows. Involved in protein export. Acts as a chaperone by maintaining the newly synthesized protein in an open conformation. Functions as a peptidyl-prolyl cis-trans isomerase. The sequence is that of Trigger factor from Alcanivorax borkumensis (strain ATCC 700651 / DSM 11573 / NCIMB 13689 / SK2).